The sequence spans 468 residues: Hepatocyte nuclear factor 3-alpha (468 aa).

Residues 169–260 (AKPPYSYISL…GNMFENGCYL (92 aa)) constitute a DNA-binding region (fork-head). The essential for DNA binding stretch occupies residues 251 to 288 (GNMFENGCYLRRQKRFKCEKQPGAGGGSGGGGSKGGPE). The interval 269–396 (EKQPGAGGGS…DPHYSFNHPF (128 aa)) is disordered. The span at 273-285 (GAGGGSGGGGSKG) shows a compositional bias: gly residues. Residues Ser303 and Ser327 each carry the phosphoserine modification. Composition is skewed to low complexity over residues 318–328 (GAPAPGPAASP) and 347–365 (SPASSSAPPISSGPGALAS).

In terms of assembly, binds DNA as a monomer. Interacts with FOXA2. Interacts with NKX2-1. Interacts with HDAC7. Interacts with the histone H3-H4 heterodimer. Associates with nucleosomes containing histone H2A. Interacts with AR. Interacts with NR0B2. As to expression, restricted mainly to endoderm-derived tissues (lung, liver, stomach, and small intestine). Expressed in the prostate.

It localises to the nucleus. In terms of biological role, transcription factor that is involved in embryonic development, establishment of tissue-specific gene expression and regulation of gene expression in differentiated tissues. Is thought to act as a 'pioneer' factor opening the compacted chromatin for other proteins through interactions with nucleosomal core histones and thereby replacing linker histones at target enhancer and/or promoter sites. Binds DNA with the consensus sequence 5'-[AC]A[AT]T[AG]TT[GT][AG][CT]T[CT]-3'. Proposed to play a role in translating the epigenetic signatures into cell type-specific enhancer-driven transcriptional programs. Involved in the development of multiple endoderm-derived organ systems such as the liver, pancreas, lungs and prostate; FOXA1 and FOXA2 seem to have at least in part redundant roles. Plays a role in prostate morphogenesis and epithelial cell differentiation. FOXA1 and FOXA2 are essential for hepatic specification. FOXA1 and FOXA2 are required for morphogenesis and cell differentiation during formation of the lung. FOXA1 and FOXA2 are involved in bile duct formation; they positively regulate the binding of glucocorticoid receptor/NR3C1 to the IL6 promoter. FOXA1 and FOXA2 regulate multiple phases of midbrain dopaminergic neuron development; they regulate expression of NEUROG2 at the beginning of mDA neurogenesis and of NR4A2 and EN1 in immature mDA neurons. Modulates the transcriptional activity of nuclear hormone receptors. Is involved in ESR1-mediated transcription. Inhibits NKX2-1-mediated transcription from the SFTPC promoter in lung epithel independently from DNA-binding. Involved in regulation of apoptosis. Involved in cell cycle regulation. Originally described as a transcription activator for a number of liver genes such as AFP, albumin, tyrosine aminotransferase, PEPCK, etc. Interacts with the cis-acting regulatory regions of these genes. Involved in glucose homeostasis; activates the GCG promoter. The protein is Hepatocyte nuclear factor 3-alpha (Foxa1) of Mus musculus (Mouse).